Consider the following 274-residue polypeptide: 3-methyl-2-oxobutanoate hydroxymethyltransferase (274 aa).

Residues Asp49 and Asp88 each coordinate Mg(2+). Residues 49-50 (DS), Asp88, and Lys118 each bind 3-methyl-2-oxobutanoate. Glu120 contacts Mg(2+). The Proton acceptor role is filled by Glu187.

It belongs to the PanB family. In terms of assembly, homodecamer; pentamer of dimers. It depends on Mg(2+) as a cofactor.

The protein resides in the cytoplasm. The catalysed reaction is 3-methyl-2-oxobutanoate + (6R)-5,10-methylene-5,6,7,8-tetrahydrofolate + H2O = 2-dehydropantoate + (6S)-5,6,7,8-tetrahydrofolate. It participates in cofactor biosynthesis; (R)-pantothenate biosynthesis; (R)-pantoate from 3-methyl-2-oxobutanoate: step 1/2. Its function is as follows. Catalyzes the reversible reaction in which hydroxymethyl group from 5,10-methylenetetrahydrofolate is transferred onto alpha-ketoisovalerate to form ketopantoate. This chain is 3-methyl-2-oxobutanoate hydroxymethyltransferase, found in Nitrobacter winogradskyi (strain ATCC 25391 / DSM 10237 / CIP 104748 / NCIMB 11846 / Nb-255).